The chain runs to 201 residues: Peptidyl-prolyl cis-trans isomerase FKBP11 (201 aa).

Residues 1–27 form the signal peptide; it reads MTLSPLLLPLQLLLLLLFSGAVCRAEA. The 88-residue stretch at 57–144 folds into the PPIase FKBP-type domain; that stretch reads GDTLHIHYTG…QYDVELIALI (88 aa). The chain crosses the membrane as a helical span at residues 156-176; that stretch reads ILPLVGIAMVPALLGLIGYHL.

It belongs to the FKBP-type PPIase family. In terms of assembly, interacts with IFITM5.

It localises to the membrane. It carries out the reaction [protein]-peptidylproline (omega=180) = [protein]-peptidylproline (omega=0). PPIases accelerate the folding of proteins during protein synthesis. This Mus musculus (Mouse) protein is Peptidyl-prolyl cis-trans isomerase FKBP11 (Fkbp11).